The sequence spans 305 residues: GMP synthase [glutamine-hydrolyzing] subunit B (305 aa).

Residues 2-184 (VDANAFIDEA…LPLPEEISER (183 aa)) enclose the GMPS ATP-PPase domain. Residue 29 to 35 (SGGVDSS) participates in ATP binding.

Heterodimer composed of a glutamine amidotransferase subunit (A) and a GMP-binding subunit (B).

The enzyme catalyses XMP + L-glutamine + ATP + H2O = GMP + L-glutamate + AMP + diphosphate + 2 H(+). It participates in purine metabolism; GMP biosynthesis; GMP from XMP (L-Gln route): step 1/1. In terms of biological role, catalyzes the synthesis of GMP from XMP. The protein is GMP synthase [glutamine-hydrolyzing] subunit B of Methanocella arvoryzae (strain DSM 22066 / NBRC 105507 / MRE50).